The chain runs to 542 residues: Chloride channel CLIC-like protein 1 (542 aa).

An N-terminal signal peptide occupies residues 1–18 (MLYSLLLCECLWLITAYA). Over 19 to 184 (HDDEWIDPTD…EEFFGVDPYN (166 aa)) the chain is Lumenal. The helical transmembrane segment at 185–205 (VFMVLLCLLCIVALVATELWT) threads the bilayer. Topologically, residues 206–216 (YVRWYTQLKRV) are cytoplasmic. Residues 217–237 (FFISFLISLGWNWMYLYKLAF) form a helical membrane-spanning segment. At 238 to 329 (AQHQAEVAKM…GEFIKALMKE (92 aa)) the chain is on the lumenal side. A helical transmembrane segment spans residues 330-350 (IPVLLHIPVLIIMALAVLSFC). Residues 351-542 (YGAGKSVNML…PASTAVEVCG (192 aa)) lie on the Cytoplasmic side of the membrane. The tract at residues 369–394 (EAPQALQAGERRRQQKIDYRPHGGAG) is disordered. Over residues 377-389 (GERRRQQKIDYRP) the composition is skewed to basic and acidic residues. 2 positions are modified to phosphoserine: Ser-438 and Ser-464. The tract at residues 452–542 (AREHPKVVPG…PASTAVEVCG (91 aa)) is disordered. Low complexity predominate over residues 480–491 (ESTPTESSTESS). Phosphothreonine is present on Thr-482. Phosphoserine is present on Ser-532.

The protein belongs to the chloride channel MCLC family. Homomultimers. Interacts with mitochondrial protein PIGBOS1 (via C-terminus); the interaction occurs at the mitochondria-associated endoplasmic reticulum (ER) membrane, a zone of contact between the ER and mitochondrial membranes, but does not appear to play a role in ER-mitochondria tethering and is not affected by ER stress. Interacts with CALR.

Its subcellular location is the endoplasmic reticulum membrane. It carries out the reaction chloride(in) = chloride(out). It catalyses the reaction bromide(in) = bromide(out). The enzyme catalyses nitrate(in) = nitrate(out). The catalysed reaction is fluoride(in) = fluoride(out). Anion-selective channel with Ca(2+)-dependent and voltage-independent gating. Permeable to small monovalent anions with selectivity for bromide &gt; chloride &gt; nitrate &gt; fluoride. Operates in the endoplasmic reticulum (ER) membrane where it mediates chloride efflux to compensate for the loss of positive charges from the ER lumen upon Ca(2+) release. Contributes to the maintenance of ER Ca(2+) pools and activation of unfolded protein response to prevent accumulation of misfolded proteins in the ER lumen. Particularly involved in ER homeostasis mechanisms underlying motor neurons and retinal photoreceptors survival. This chain is Chloride channel CLIC-like protein 1 (CLCC1), found in Bos taurus (Bovine).